The following is an 871-amino-acid chain: Espin (871 aa).

ANK repeat units follow at residues 1-31, 35-66, 69-99, 103-132, 137-167, 171-201, 205-235, 239-268, and 271-300; these read MALEQALQAARRGDLDVLRSLHAAGLLGPSL, LDALPVHHAARSGKLHCLRYLVEEVALPAVSR, NGATPAHDAAATGYLSCLQWLLTQGGCRVQE, SGATVLHLAARFGHPDVVKWLLYQGGANSA, TGALPIHYAAAKGDLPSLKLLVGHYPEGVNA, NGATPLYLACQEGHLEVTKYLVQECSADPHL, DGMTPLHAAAQMGHNPVLVWLVSFADVSFSE, DGATAMHFAASRGHTKVLSWLLLHGAEISQ, and WGGTPLHDAAENGELECCQILAVNGAGLDV. Phosphoserine occurs at positions 338 and 342. 4 disordered regions span residues 349-400, 416-469, 493-750, and 819-850; these read QLDS…RGIP, PEKS…VGLH, KVEL…APGV, and EREQKRKEEERQKLEEIQRAKEQSEKLRTLGY. Polar residues predominate over residues 352-365; the sequence is SGMSSPNTTMSVQP. Positions 377–395 are enriched in low complexity; the sequence is FSNYDSCSSSHSSSKGQRS. The segment covering 428 to 465 has biased composition (pro residues); that stretch reads PSPPPPPPPPPPSFPPPPPPTGTQPPPPPPGYPAPNPP. Serine 517, serine 524, and serine 556 each carry phosphoserine. Residues 522 to 548 show a composition bias toward basic and acidic residues; the sequence is QDSELLHRQELLRHSTGLRRQDSDRKQ. Residues 606 to 629 show a composition bias toward pro residues; it reads LPPPPPPPPLPEALSSPPPAPPLP. 2 stretches are compositionally biased toward polar residues: residues 659-670 and 685-707; these read KSFNMMSPTGDN and PTPQSKGLTTVFSGSGQPASQPE. Residue serine 665 is modified to Phosphoserine. Residues 669-686 form the WH2 domain; it reads DNSELLAEIKAGKSLKPT. Residues serine 704, serine 708, and serine 714 each carry the phosphoserine modification. Residues 772-848 are a coiled coil; it reads KRQVMVRKLQ…KEQSEKLRTL (77 aa).

As to quaternary structure, monomer. Binds F-actin in a Ca(2+)-resistant fashion. Interacts (via N-terminus) with BAIAP2 (via SH3-domain). Interacts with PFN2. Interacts with MYO3A (via C-terminus). Interacts with MYO3B (via C-terminus). Expressed at high concentration in the microvillar parallel actin bundle (PAB) of hair cells stereocilia in the cochlea and vestibular system. Detected also at high levels of a number of other sensory cell types, including taste receptor cells, solitary chemoreceptor cells, vomeronasal sensory neurons and Merkel cells. Isoforms 2, 3, 4 and 5 are expressed in Purkinje cells dendritic spines. Expressed in utricle hair bundles (at protein level).

The protein localises to the cytoplasm. It is found in the cytoskeleton. It localises to the cell projection. The protein resides in the stereocilium. Its subcellular location is the microvillus. The protein localises to the cell junction. It is found in the dendritic spine. Functionally, multifunctional actin-bundling protein. Plays a major role in regulating the organization, dimension, dynamics and signaling capacities of the actin filament-rich microvilli in the mechanosensory and chemosensory cells. Required for the assembly and stabilization of the stereociliary parallel actin bundles. Plays a crucial role in the formation and maintenance of inner ear hair cell stereocilia. Involved in the elongation of actin in stereocilia. In extrastriolar hair cells, required for targeting MYO3B to stereocilia tips, and for regulation of stereocilia diameter and staircase formation. This chain is Espin (Espn), found in Mus musculus (Mouse).